A 195-amino-acid polypeptide reads, in one-letter code: Large ribosomal subunit protein uL18 (195 aa).

Belongs to the universal ribosomal protein uL18 family. As to quaternary structure, part of the 50S ribosomal subunit. Contacts the 5S and 23S rRNAs.

Its function is as follows. This is one of the proteins that bind and probably mediate the attachment of the 5S RNA into the large ribosomal subunit, where it forms part of the central protuberance. This is Large ribosomal subunit protein uL18 from Metallosphaera sedula (strain ATCC 51363 / DSM 5348 / JCM 9185 / NBRC 15509 / TH2).